Reading from the N-terminus, the 180-residue chain is Free methionine-R-sulfoxide reductase (180 aa).

One can recognise a GAF domain in the interval 99–177 (GVCGTAASTK…KLAKLINKSC (79 aa)).

The protein belongs to the free Met sulfoxide reductase family.

It localises to the cytoplasm. The protein localises to the nucleus. The enzyme catalyses [thioredoxin]-disulfide + L-methionine + H2O = L-methionine (R)-S-oxide + [thioredoxin]-dithiol. Its function is as follows. Catalyzes the reversible oxidation-reduction of the R-enantiomer of free methionine sulfoxide to methionine. Does not act on S-enantiomer of free methionine sulfoxide or R-enantiomer of dabsylated methionine sulfoxide. Involved in protection against oxidative stress. In Saccharomyces cerevisiae (strain ATCC 204508 / S288c) (Baker's yeast), this protein is Free methionine-R-sulfoxide reductase.